A 528-amino-acid chain; its full sequence is MTISSVKQSYGAKLGVGYIATATLLITVGVVTQDVASTVVAGIAGLLTLGSINAAETVASITELSAQTQRVADGDLDIEIDSTRTDEFGDLADSIEQMRVSLRDRLSEMEAARADLEQAQTDANEAQAEAEAAEEEAKELATAYQDIATEYGTVMAAAADGDLTQRVDVATEYDAMETVGQSFNRMMDELQETIETVTAVSKRITTETDEITETSRRVQQEVDAAVETVADIQTQATDQQTKLESAAVDIQDVSASAEEIAATIDDLADRSSEVEEASSDARTASETALTEMDQIQADAADAVTQVETLQQRMAEITDIADIISEIAEQTNMLALNASIEAARAGGQGSGADGNGFSVVADEVKSLAEETQSRADEIATVIAEVSEQTEEVTDSIQATETRVETGTETVESALSEIATIAEAVDDISASIEEMRETTSEQADTVQATADSIADVTEASAETATTAEEMSTQIRRQRDVVKSISDSLDSFRETAVDDLESRVRLFTINTDTTAASQTRAVGSPSIGGDD.

2 helical membrane passes run 11–31 (GAKL…VGVV) and 35–55 (VAST…INAA). HAMP domains are found at residues 55 to 107 (AETV…DRLS) and 142 to 195 (TAYQ…ETIE). A Methyl-accepting transducer domain is found at 214-455 (TSRRVQQEVD…ATADSIADVT (242 aa)). The residue at position 259 (glutamate 259) is a Glutamate methyl ester (Glu).

It belongs to the methyl-accepting chemotaxis (MCP) protein family. Interacts with Sop1.

Its subcellular location is the cell membrane. Transduces signals from the phototaxis receptor sensory rhodopsin I (Sop1). The chain is Sensory rhodopsin I transducer (htr1) from Haloarcula marismortui (strain ATCC 43049 / DSM 3752 / JCM 8966 / VKM B-1809) (Halobacterium marismortui).